The following is a 367-amino-acid chain: Flagellar P-ring protein (367 aa).

The signal sequence occupies residues 1–22; that stretch reads MRRMLVIRWILAIHLIATQVFA.

This sequence belongs to the FlgI family. In terms of assembly, the basal body constitutes a major portion of the flagellar organelle and consists of four rings (L,P,S, and M) mounted on a central rod.

It is found in the periplasm. It localises to the bacterial flagellum basal body. Its function is as follows. Assembles around the rod to form the L-ring and probably protects the motor/basal body from shearing forces during rotation. This chain is Flagellar P-ring protein, found in Legionella pneumophila (strain Corby).